A 242-amino-acid chain; its full sequence is Sec-independent protein translocase protein TatCd (242 aa).

3 helical membrane passes run 19–39 (IIVTLAAFFLFLITAFLFVQD), 60–80 (ILWVYMMLSGICAIAASIPVA), and 107–127 (LFALFLAGISFGYFVLFPIVL). Residues 128–149 (SFLTHLSSGHFETMFTADRYFR) form an interaction with TatAd region. The chain crosses the membrane as a helical span at residues 150–170 (FMVNLSLPFGFLFEMPLVVMF). The interval 171–187 (LTRLGILNPYRLAKARK) is interaction with TatAd. Transmembrane regions (helical) follow at residues 188–208 (LSYFLLIVVSILITPPDFISD) and 209–229 (FLVMIPLLVLFEVSVTLSAFV).

It belongs to the TatC family. Forms a complex with TatAd. Two types of complexes exist: one composed of TatAd and TatCd, and another composed only of TatAd.

It localises to the cell membrane. Its function is as follows. Part of the twin-arginine translocation (Tat) system that transports large folded proteins containing a characteristic twin-arginine motif in their signal peptide across membranes. Required for PhoD secretion. TatCd promotes membrane localization of TatAd via domain specific interactions. TatCd is required for stabile production of TatAd as well as for its maintenance. This Bacillus subtilis (strain 168) protein is Sec-independent protein translocase protein TatCd.